Here is a 461-residue protein sequence, read N- to C-terminus: Propanal dehydrogenase (CoA-propanoylating) (461 aa).

The tract at residues 1 to 18 (MNTSELETLIRNILSEQL) is targets protein to the BMC.

It belongs to the EutE/PduP family. In terms of assembly, interacts with PduK, probably with its BMC-containing N-terminus. Interacts with shell proteins PduA and PduJ, interacts with PduQ.

It localises to the bacterial microcompartment. It catalyses the reaction propanal + NAD(+) + CoA = propanoyl-CoA + NADH + H(+). It functions in the pathway polyol metabolism; 1,2-propanediol degradation. Functionally, a CoA-acylating aldehyde dehydrogenase required for optimal 1,2-propanediol (1,2-PD) degradation. Optimizes growth in the bacterial microcompartment (BMC) dedicated to 1,2-PD degradation by minimizing propionaldehyde toxicity. NAD(+) and NADH are regenerated internally within the Pdu BMC by the PduP and PduQ enzymes, which reduce NAD(+) and oxidize NADH respectively, although there must also be cofactor transport across the BMC. Directly targeted to the BMC. In terms of biological role, expression of a cosmid containing the full 21-gene pdu operon in E.coli allows E.coli to grow on 1,2-propanediol (1,2-PD) with the appearance of bacterial microcompartments (BMC) in its cytoplasm. The 1,2-PD-specific bacterial microcompartment (BMC) concentrates low levels of 1,2-PD catabolic enzymes, concentrates volatile reaction intermediates thus enhancing pathway flux and keeps the level of toxic, mutagenic propionaldehyde low. In Citrobacter freundii, this protein is Propanal dehydrogenase (CoA-propanoylating).